We begin with the raw amino-acid sequence, 281 residues long: UPF0294 protein VC_2238 (281 aa).

This sequence belongs to the UPF0294 family.

It is found in the cytoplasm. The chain is UPF0294 protein VC_2238 from Vibrio cholerae serotype O1 (strain ATCC 39315 / El Tor Inaba N16961).